The sequence spans 483 residues: Cobyric acid synthase (483 aa).

A GATase cobBQ-type domain is found at 251–438 (ALIVAVPMLP…LHGIFSADRF (188 aa)). The Nucleophile role is filled by Cys-333. The active site involves His-430.

It belongs to the CobB/CobQ family. CobQ subfamily.

Its pathway is cofactor biosynthesis; adenosylcobalamin biosynthesis. Functionally, catalyzes amidations at positions B, D, E, and G on adenosylcobyrinic A,C-diamide. NH(2) groups are provided by glutamine, and one molecule of ATP is hydrogenolyzed for each amidation. The chain is Cobyric acid synthase from Brucella abortus (strain S19).